Consider the following 331-residue polypeptide: Smad-related protein daf-14 (331 aa).

The MH2 domain occupies 134 to 331 (WCTIFYYELT…NERPEIGSRS (198 aa)). Positions 168–187 (ECRMSLTSQPSSRNSKSSQI) are disordered. Low complexity predominate over residues 175–185 (SQPSSRNSKSS).

In terms of assembly, interacts with R-SMAD daf-8 and co-SMAD daf-3. Interacts with daf-3 in a daf-8 dependent manner.

Functionally, probably an atypical receptor-regulated SMAD (R-SMAD) that is an intracellular signal transducer and transcriptional modulator activated by TGF-beta-like daf-7 signaling. Plays a role in TGF-beta-like daf-7 signaling in regulating entry into a developmentally arrested larval state known as dauer, in response to harsh environmental conditions; partially redundant with R-SMAD daf-8. The chain is Smad-related protein daf-14 from Caenorhabditis elegans.